We begin with the raw amino-acid sequence, 598 residues long: uncharacterized protein (598 aa).

Residue serine 46 is modified to Phosphoserine. The SAC domain occupies 106-441 (LQNHLKTGPF…ADYISLSYSG (336 aa)). Helical transmembrane passes span 508-528 (TIRC…MTLF) and 535-555 (ILPP…SLYY).

The protein resides in the endoplasmic reticulum membrane. This is an uncharacterized protein from Schizosaccharomyces pombe (strain 972 / ATCC 24843) (Fission yeast).